The primary structure comprises 206 residues: uncharacterized protein (206 aa).

The next 4 helical transmembrane spans lie at 9–29 (ILSL…SVLT), 47–67 (LGVV…LAFL), 74–94 (FFVI…INTI), and 150–170 (IAVI…FYAF).

The protein belongs to the Rht family.

Its subcellular location is the cell membrane. This is an uncharacterized protein from Synechocystis sp. (strain ATCC 27184 / PCC 6803 / Kazusa).